Here is a 716-residue protein sequence, read N- to C-terminus: Eosinophil peroxidase (716 aa).

Residues 1–18 (MMQQLLALVGALATLILT) form the signal peptide. A propeptide spanning residues 19-140 (QHAEGTAPAS…SGCALQDQAE (122 aa)) is cleaved from the precursor. Asparagine 53 and asparagine 114 each carry an N-linked (GlcNAc...) asparagine glycan. Cysteine 142 and cysteine 153 form a disulfide bridge. Aspartate 233 contributes to the heme b binding site. Catalysis depends on histidine 234, which acts as the Proton acceptor. Position 235 (aspartate 235) interacts with Ca(2+). Disulfide bonds link cysteine 254–cysteine 264 and cysteine 258–cysteine 282. Ca(2+) is bound by residues threonine 307, phenylalanine 309, aspartate 311, and serine 313. Residues asparagine 328 and asparagine 364 are each glycosylated (N-linked (GlcNAc...) asparagine). The cysteines at positions 360 and 371 are disulfide-linked. Heme b-binding residues include glutamate 381 and histidine 475. A 3'-nitrotyrosine modification is found at tyrosine 489. Intrachain disulfides connect cysteine 579-cysteine 636 and cysteine 677-cysteine 702. The N-linked (GlcNAc...) asparagine glycan is linked to asparagine 709.

The protein belongs to the peroxidase family. XPO subfamily. In terms of assembly, tetramer of two light chains and two heavy chains. Ca(2+) serves as cofactor. Heme b is required as a cofactor.

Its subcellular location is the cytoplasmic granule. The catalysed reaction is 2 a phenolic donor + H2O2 = 2 a phenolic radical donor + 2 H2O. Functionally, mediates tyrosine nitration of secondary granule proteins in mature resting eosinophils. This is Eosinophil peroxidase (Epx) from Mus musculus (Mouse).